A 203-amino-acid polypeptide reads, in one-letter code: Large ribosomal subunit protein uL13 (203 aa).

An N-acetylalanine modification is found at Ala2. Arg59 is modified (citrulline). Ser77 is modified (phosphoserine; by ZIPK/DAPK3). Arg140 carries the post-translational modification Citrulline. N6-acetyllysine is present on Lys191.

This sequence belongs to the universal ribosomal protein uL13 family. In terms of assembly, component of the 60S ribosome. Component of the GAIT complex. Interacts with EIF4G1. Phosphorylation at Ser-77 upon interferon-gamma treatment in monocytes involves a DAPK1-DAPK3 kinase cascade and is causing release from the ribosome, association with the GAIT complex and subsequent involvement in transcript-selective translation inhibition. Post-translationally, citrullinated by PADI4.

Its subcellular location is the cytoplasm. Functionally, associated with ribosomes but is not required for canonical ribosome function and has extra-ribosomal functions. Component of the GAIT (gamma interferon-activated inhibitor of translation) complex which mediates interferon-gamma-induced transcript-selective translation inhibition in inflammation processes. Upon interferon-gamma activation and subsequent phosphorylation dissociates from the ribosome and assembles into the GAIT complex which binds to stem loop-containing GAIT elements in the 3'-UTR of diverse inflammatory mRNAs (such as ceruplasmin) and suppresses their translation. In the GAIT complex interacts with m7G cap-bound eIF4G at or near the eIF3-binding site and blocks the recruitment of the 43S ribosomal complex. Involved in methylation of rRNA. This Homo sapiens (Human) protein is Large ribosomal subunit protein uL13 (RPL13A).